Here is a 274-residue protein sequence, read N- to C-terminus: 16S rRNA (guanine(1405)-N(7))-methyltransferase (274 aa).

S-adenosyl-L-methionine is bound by residues Phe64, 102–104 (HMS), Arg108, Ala133, Asp156, 182–183 (DL), Leu198, and Gln207.

The protein belongs to the methyltransferase superfamily. Aminoglycoside resistance family.

The enzyme catalyses guanosine(1405) in 16S rRNA + S-adenosyl-L-methionine = N(7)-methylguanosine(1405) in 16S rRNA + S-adenosyl-L-homocysteine. Specifically methylates the N(7) position of guanine 1405 in 16S rRNA. Confers resistance to aminoglycosides. The protein is 16S rRNA (guanine(1405)-N(7))-methyltransferase (grm) of Micromonospora rosea.